We begin with the raw amino-acid sequence, 359 residues long: 4-galactosyl-N-acetylglucosaminide 3-alpha-L-fucosyltransferase 9 (359 aa).

Residues 1–11 lie on the Cytoplasmic side of the membrane; it reads MTSTSKGILRP. A helical; Signal-anchor for type II membrane protein membrane pass occupies residues 12 to 32; sequence FLIVCIILGCFVACLLIYIKP. At 33 to 359 the chain is on the lumenal side; the sequence is TNSWVFSPME…VGNLEKWFWN (327 aa). Asn62 is a glycosylation site (N-linked (GlcNAc...) asparagine). An acceptor-binding region spans residues 63-168; the sequence is ETTILVWVWP…RRDSDIQVPY (106 aa). Position 75 (Gln75) interacts with a beta-D-galactosyl-(1-&gt;4)-N-acetyl-beta-D-glucosaminyl derivative. Disulfide bonds link Cys82–Cys335, Cys91–Cys338, and Cys190–Cys238. N-linked (GlcNAc...) asparagine glycosylation is present at Asn101. Glu137 is a binding site for a beta-D-galactosyl-(1-&gt;4)-N-acetyl-beta-D-glucosaminyl derivative. Catalysis depends on Glu137, which acts as the Nucleophile. A GDP-beta-L-fucose-binding site is contributed by Glu137. N-linked (GlcNAc...) asparagine glycosylation occurs at Asn153. Residues Tyr168, Val192, Ser194, Asn195, Arg202, Val226, Tyr241, Asn246, Tyr252, Glu255, and Lys256 each coordinate GDP-beta-L-fucose. Positions 169–326 are donor-binding; sequence GFLTVSTSPF…NWRKDFTVNL (158 aa). The tract at residues 327-359 is acceptor-binding; it reads PRFWESHACLACDHVKRHQEYKSVGNLEKWFWN.

Belongs to the glycosyltransferase 10 family. As to quaternary structure, homodimer. Post-translationally, N-glycosylated with complex-type N-glycans.

The protein resides in the golgi apparatus. It localises to the trans-Golgi network membrane. The protein localises to the golgi apparatus membrane. The enzyme catalyses a beta-D-galactosyl-(1-&gt;4)-N-acetyl-beta-D-glucosaminyl derivative + GDP-beta-L-fucose = a beta-D-galactosyl-(1-&gt;4)-[alpha-L-fucosyl-(1-&gt;3)]-N-acetyl-beta-D-glucosaminyl derivative + GDP + H(+). It carries out the reaction an alpha-Neu5Ac-(2-&gt;3)-beta-D-Gal-(1-&gt;4)-beta-D-GlcNAc-(1-&gt;3)-beta-D-Gal-(1-&gt;4)-beta-D-GlcNAc derivative + GDP-beta-L-fucose = an alpha-Neu5Ac-(2-&gt;3)-beta-D-Gal-(1-&gt;4)-beta-D-GlcNAc-(1-&gt;3)-beta-D-Gal-(1-&gt;4)-[alpha-L-Fuc-(1-&gt;3)]-beta-D-GlcNAc derivative + GDP + H(+). The catalysed reaction is alpha-N-glycoloylneuraminosyl-(2-&gt;3)-beta-D-galactosyl-(1-&gt;4)-N-acetyl-beta-D-glucosaminyl-(1-&gt;3)-beta-D-galactosyl-(1-&gt;4)-N-acetyl-beta-D-glucosaminyl-(1-&gt;3)-beta-D-galactosyl-(1-&gt;4)-beta-D-glucosyl-(1&lt;-&gt;1')-ceramide + GDP-beta-L-fucose = alpha-N-glycoloylneuraminosyl-(2-&gt;3)-beta-D-galactosyl-(1-&gt;4)-N-acetyl-beta-D-glucosaminyl-(1-&gt;3)-beta-D-galactosyl-(1-&gt;4)-[alpha-L-fucosyl-(1-&gt;3)]-N-acetyl-beta-D-glucosaminyl-(1-&gt;3)-beta-D-galactosyl-(1-&gt;4)-beta-D-glucosyl-(1&lt;-&gt;1')-ceramide + GDP + H(+). It catalyses the reaction alpha-D-galactosyl-(1-&gt;3)-beta-D-galactosyl-(1-&gt;4)-N-acetyl-beta-D-glucosaminyl-(1-&gt;3)-beta-D-galactosyl-(1-&gt;4)-beta-D-glucosyl-(1&lt;-&gt;1')-ceramide + GDP-beta-L-fucose = a neolactoside IV(3)-alpha-Gal,III(3)-alpha-Fuc-nLc4Cer + GDP + H(+). The enzyme catalyses a neolactoside nLc4Cer + GDP-beta-L-fucose = a neolactoside III(3)-alpha-Fuc-nLc4Cer + GDP + H(+). It carries out the reaction an N-acetyl-alpha-neuraminyl-(2-&gt;3)-beta-D-galactosyl-(1-&gt;4)-N-acetyl-beta-D-glucosaminyl derivative + GDP-beta-L-fucose = an alpha-Neu5Ac-(2-&gt;3)-beta-D-Gal-(1-&gt;4)-[alpha-L-Fuc-(1-&gt;3)]-beta-D-GlcNAc derivative + GDP + H(+). The catalysed reaction is beta-D-Gal-(1-&gt;4)-beta-D-GlcNAc-(1-&gt;3)-beta-D-Gal-(1-&gt;4)-D-Glc + GDP-beta-L-fucose = beta-D-Gal-(1-&gt;4)-[alpha-L-Fuc-(1-&gt;3)]-beta-D-GlcNAc-(1-&gt;3)-beta-D-Gal-(1-&gt;4)-D-Glc + GDP + H(+). It catalyses the reaction an alpha-L-Fuc-(1-&gt;2)-beta-D-Gal-(1-&gt;4)-beta-D-GlcNAc derivative + GDP-beta-L-fucose = an alpha-L-Fuc-(1-&gt;2)-beta-D-Gal-(1-&gt;4)-[alpha-L-Fuc-(1-&gt;3)]-beta-D-GlcNAc derivative + GDP + H(+). It participates in protein modification; protein glycosylation. It functions in the pathway glycolipid biosynthesis. Activated by Mn2+. Catalyzes alpha(1-&gt;3) linkage of fucosyl moiety transferred from GDP-beta-L-fucose to N-acetyl glucosamine (GlcNAc) within type 2 lactosamine (LacNAc, beta-D-Gal-(1-&gt;4)-beta-D-GlcNAc-) glycan attached to glycolipids and N- or O-linked glycoproteins. Fucosylates distal type 2 LacNAc and its fucosylated (H-type 2 LacNAc) and sialylated (sialyl-type 2 LacNAc) derivatives to form Lewis x (Lex) (CD15) and Lewis y (Ley) antigenic epitopes involved in cell adhesion and differentiation. Generates Lex epitopes in the brain, presumably playing a role in the maintenance of neuronal stemness and neurite outgrowth in progenitor neural cells. Fucosylates the internal type 2 LacNAc unit of the polylactosamine chain to form VIM-2 antigen that serves as recognition epitope for SELE. Can also modify milk oligosaccharides in particular type 2 tetrasaccharide LNnT. The polypeptide is 4-galactosyl-N-acetylglucosaminide 3-alpha-L-fucosyltransferase 9 (Rattus norvegicus (Rat)).